The chain runs to 197 residues: Ribonuclease HII (197 aa).

The region spanning 7–197 is the RNase H type-2 domain; the sequence is LGIAGVDEVG…SFLRKLFATV (191 aa). D13, E14, and D109 together coordinate a divalent metal cation.

It belongs to the RNase HII family. Mn(2+) is required as a cofactor. It depends on Mg(2+) as a cofactor.

Its subcellular location is the cytoplasm. The enzyme catalyses Endonucleolytic cleavage to 5'-phosphomonoester.. Endonuclease that specifically degrades the RNA of RNA-DNA hybrids. The chain is Ribonuclease HII from Synechococcus sp. (strain CC9311).